We begin with the raw amino-acid sequence, 356 residues long: Dual-specificity RNA methyltransferase RlmN (356 aa).

The Proton acceptor role is filled by E89. A Radical SAM core domain is found at 108–341 (SHARYTICVS…CTIRESKGLD (234 aa)). A disulfide bridge connects residues C115 and C346. 3 residues coordinate [4Fe-4S] cluster: C122, C126, and C129. S-adenosyl-L-methionine-binding positions include 172–173 (GE), S204, 227–229 (SLH), and N303. The active-site S-methylcysteine intermediate is C346.

This sequence belongs to the radical SAM superfamily. RlmN family. The cofactor is [4Fe-4S] cluster.

It is found in the cytoplasm. The enzyme catalyses adenosine(2503) in 23S rRNA + 2 reduced [2Fe-2S]-[ferredoxin] + 2 S-adenosyl-L-methionine = 2-methyladenosine(2503) in 23S rRNA + 5'-deoxyadenosine + L-methionine + 2 oxidized [2Fe-2S]-[ferredoxin] + S-adenosyl-L-homocysteine. The catalysed reaction is adenosine(37) in tRNA + 2 reduced [2Fe-2S]-[ferredoxin] + 2 S-adenosyl-L-methionine = 2-methyladenosine(37) in tRNA + 5'-deoxyadenosine + L-methionine + 2 oxidized [2Fe-2S]-[ferredoxin] + S-adenosyl-L-homocysteine. In terms of biological role, specifically methylates position 2 of adenine 2503 in 23S rRNA and position 2 of adenine 37 in tRNAs. m2A2503 modification seems to play a crucial role in the proofreading step occurring at the peptidyl transferase center and thus would serve to optimize ribosomal fidelity. The chain is Dual-specificity RNA methyltransferase RlmN from Campylobacter jejuni (strain RM1221).